A 395-amino-acid polypeptide reads, in one-letter code: ATP phosphoribosyltransferase regulatory subunit (395 aa).

This sequence belongs to the class-II aminoacyl-tRNA synthetase family. HisZ subfamily. As to quaternary structure, heteromultimer composed of HisG and HisZ subunits.

Its subcellular location is the cytoplasm. Its pathway is amino-acid biosynthesis; L-histidine biosynthesis; L-histidine from 5-phospho-alpha-D-ribose 1-diphosphate: step 1/9. Functionally, required for the first step of histidine biosynthesis. May allow the feedback regulation of ATP phosphoribosyltransferase activity by histidine. This is ATP phosphoribosyltransferase regulatory subunit from Pseudomonas syringae pv. syringae (strain B728a).